Consider the following 902-residue polypeptide: MRIICRQIVLLFSGFWGLAMGAFPSSVQIGGLFIRNTDQEYTAFRLAIFLHNTSPNASEAPFNLVPHVDNIETANSFAVTNAFCSQYSRGVFAIFGLYDKRSVHTLTSFCSALHISLITPSFPTEGESQFVLQLRPSLRGALLSLLDHYEWNCFVFLYDTDRGYSILQAIMEKAGQNGWHVSAICVENFNDVSYRQLLEELDRRQEKKFVIDCEIERLQNILEQIVSVGKHVKGYHYIIANLGFKDISLERFIHGGANVTGFQLVDFNTPMVTKLMDRWKKLDQREYPGSETPPKYTSALTYDGVLVMAETFRSLRRQKIDISRRGNAGDCLANPAAPWGQGIDMERTLKQVRIQGLTGNVQFDHYGRRVNYTMDVFELKSTGPRKVGYWNDMDKLVLIQDMPTLGNDTAAIENRTVVVTTIMESPYVMYKKNHEMFEGNDKYEGYCVDLASEIAKHIGIKYKIAIVPDGKYGARDADTKIWNGMVGELVYGKAEIAIAPLTITLVREEVIDFSKPFMSLGISIMIKKPQKSKPGVFSFLDPLAYEIWMCIVFAYIGVSVVLFLVSRFSPYEWHTEEPEDGKEGPSDQPPNEFGIFNSLWFSLGAFMQQGCDISPRSLSGRIVGGVWWFFTLIIISSYTANLAAFLTVERMVSPIESAEDLAKQTEIAYGTLDSGSTKEFFRRSKIAVYEKMWTYMRSAEPSVFTRTTAEGVARVRKSKGKFAFLLESTMNEYTEQRKPCDTMKVGGNLDSKGYGVATPKGSSLGNAVNLAVLKLNEQGLLDKLKNKWWYDKGECGSGGGDSKDKTSALSLSNVAGVFYILVGGLGLAMLVALIEFCYKSRAEAKRMKLTFSEATRNKARLSITGSVGENGRVLTPDCPKAVHTGTAIRQSSGLAVIASDLP.

Residues 1 to 20 (MRIICRQIVLLFSGFWGLAM) form the signal peptide. The Extracellular segment spans residues 22 to 544 (AFPSSVQIGG…GVFSFLDPLA (523 aa)). Residues N52, N56, N258, N371, N407, and N414 are each glycosylated (N-linked (GlcNAc...) asparagine). C84 and C331 are oxidised to a cystine. The L-glutamate site is built by P500, T502, and R507. A helical transmembrane segment spans residues 545–565 (YEIWMCIVFAYIGVSVVLFLV). Residues 566–592 (SRFSPYEWHTEEPEDGKEGPSDQPPNE) lie on the Cytoplasmic side of the membrane. An intramembrane region (helical; Pore-forming) is located at residues 593-608 (FGIFNSLWFSLGAFMQ). Residues 609-611 (QGC) lie within the membrane without spanning it. C611 carries S-palmitoyl cysteine lipidation. Residues 612-617 (DISPRS) are Cytoplasmic-facing. Residues 618–638 (LSGRIVGGVWWFFTLIIISSY) form a helical membrane-spanning segment. Residues 639 to 813 (TANLAAFLTV…DKTSALSLSN (175 aa)) are Extracellular-facing. Residues S676, T677, and E727 each coordinate L-glutamate. C740 and C795 form a disulfide bridge. A helical membrane pass occupies residues 814–834 (VAGVFYILVGGLGLAMLVALI). The Cytoplasmic portion of the chain corresponds to 835–902 (EFCYKSRAEA…GLAVIASDLP (68 aa)). Residue C837 is the site of S-palmitoyl cysteine attachment. S862 bears the Phosphoserine; by PKC/PRKCG mark.

This sequence belongs to the glutamate-gated ion channel (TC 1.A.10.1) family. GRIA4 subfamily. As to quaternary structure, homotetramer or heterotetramer of pore-forming glutamate receptor subunits. Tetramers may be formed by the dimerization of dimers. Interacts with EPB41L1 via its C-terminus. Isoform 3 interacts with PICK1. Found in a complex with GRIA1, GRIA2, GRIA3, CNIH2, CNIH3, CACNG2, CACNG3, CACNG4, CACNG5, CACNG7 and CACNG8. Interacts with CACNG5 and PRKCG. Found in a complex with GRIA1, GRIA2, GRIA3, DLG4, CACNG8 and CNIH2. Palmitoylated. Depalmitoylated upon L-glutamate stimulation. ZDHHC3/GODZ specifically palmitoylates Cys-611, which leads to Golgi retention and decreased cell surface expression. In contrast, Cys-837 palmitoylation does not affect cell surface expression but regulates stimulation-dependent endocytosis. Post-translationally, phosphorylated at Ser-862 by PRKCG; phosphorylation increases plasma membrane-associated GRI4 expression. In terms of tissue distribution, detected in cerebellum.

The protein localises to the cell membrane. The protein resides in the postsynaptic cell membrane. It localises to the cell projection. It is found in the dendrite. The enzyme catalyses Ca(2+)(in) = Ca(2+)(out). The catalysed reaction is Na(+)(in) = Na(+)(out). It carries out the reaction Mg(2+)(in) = Mg(2+)(out). Ionotropic glutamate receptor that functions as a ligand-gated cation channel, gated by L-glutamate and glutamatergic agonists such as alpha-amino-3-hydroxy-5-methyl-4-isoxazolepropionic acid (AMPA), quisqualic acid, and kainic acid. L-glutamate acts as an excitatory neurotransmitter at many synapses in the central nervous system and plays an important role in fast excitatory synaptic transmission. Binding of the excitatory neurotransmitter L-glutamate induces a conformation change, leading to the opening of the cation channel, and thereby converts the chemical signal to an electrical impulse upon entry of monovalent and divalent cations such as sodium and calcium. The receptor then desensitizes rapidly and enters a transient inactive state, characterized by the presence of bound agonist. In the presence of CACNG8, shows resensitization which is characterized by a delayed accumulation of current flux upon continued application of L-glutamate. In Rattus norvegicus (Rat), this protein is Glutamate receptor 4.